The chain runs to 165 residues: Phosphopantetheine adenylyltransferase (165 aa).

Residue S9 participates in substrate binding. ATP contacts are provided by residues 9-10 (SF) and H17. Substrate contacts are provided by K41, I75, and R89. Residues 90–92 (GVR), E100, and 125–131 (YLFVRSD) each bind ATP.

It belongs to the bacterial CoaD family. As to quaternary structure, homohexamer. Mg(2+) is required as a cofactor.

The protein localises to the cytoplasm. The enzyme catalyses (R)-4'-phosphopantetheine + ATP + H(+) = 3'-dephospho-CoA + diphosphate. The protein operates within cofactor biosynthesis; coenzyme A biosynthesis; CoA from (R)-pantothenate: step 4/5. Its function is as follows. Reversibly transfers an adenylyl group from ATP to 4'-phosphopantetheine, yielding dephospho-CoA (dPCoA) and pyrophosphate. The protein is Phosphopantetheine adenylyltransferase of Borrelia duttonii (strain Ly).